We begin with the raw amino-acid sequence, 380 residues long: Anhydro-N-acetylmuramic acid kinase (380 aa).

Residue Gly17–Asp24 participates in ATP binding.

It belongs to the anhydro-N-acetylmuramic acid kinase family.

The enzyme catalyses 1,6-anhydro-N-acetyl-beta-muramate + ATP + H2O = N-acetyl-D-muramate 6-phosphate + ADP + H(+). The protein operates within amino-sugar metabolism; 1,6-anhydro-N-acetylmuramate degradation. It functions in the pathway cell wall biogenesis; peptidoglycan recycling. Catalyzes the specific phosphorylation of 1,6-anhydro-N-acetylmuramic acid (anhMurNAc) with the simultaneous cleavage of the 1,6-anhydro ring, generating MurNAc-6-P. Is required for the utilization of anhMurNAc either imported from the medium or derived from its own cell wall murein, and thus plays a role in cell wall recycling. This is Anhydro-N-acetylmuramic acid kinase from Cupriavidus metallidurans (strain ATCC 43123 / DSM 2839 / NBRC 102507 / CH34) (Ralstonia metallidurans).